We begin with the raw amino-acid sequence, 932 residues long: Chitin synthase regulatory factor 3 (932 aa).

The span at 1-16 (MKDSHSSRRKYEKEKL) shows a compositional bias: basic and acidic residues. Disordered stretches follow at residues 1–53 (MKDS…PTSR), 264–356 (TLEE…LQQP), and 374–406 (EVPAPTFDRRNVSRNSNNNSPEGYDNNRTNPTV). Composition is skewed to polar residues over residues 35–53 (SGNTASSSSPTLQFRPTSR), 274–285 (DSITNTVSNASS), and 308–319 (SHFSSTDSNTDS). Residues 337-349 (KSSETLKNPRNDD) show a composition bias toward basic and acidic residues. Serine 393 carries the post-translational modification Phosphoserine. Sel1-like repeat units follow at residues 638–674 (PEALFLIGQFHSQGVLGFRRDLGKAFELYSLAAKKGH), 675–710 (PLSNYRVAVCLQTGTGVKPDTSKCVAIYKKAAEMDV), 711–747 (VEAMFRIALIYLNGLLGQKRNISLGVQWLERACKSKG), 751–788 (VRAMYELAKIYEQPDRYGVSATPERKFELYKQSAVYGY), 789–825 (AAAQCKLGECYEHGLLGCLAEPRRSIFWYTRAAEQDY), 826–863 (GEAELGLSGWYLTGSEGILPKNGEEALLWAHKAACKGL), and 864–899 (AKAQYAVGFMMEQGIGVAADPSSAHNWYIRAAKQGF). Residues 905–932 (RLEEQALSSKQTHSKAPKKKQQEQCVVM) are disordered.

The protein is Chitin synthase regulatory factor 3 (chr3) of Schizosaccharomyces pombe (strain 972 / ATCC 24843) (Fission yeast).